The following is a 276-amino-acid chain: Large ribosomal subunit protein uL2 (276 aa).

A disordered region spans residues 221–276 (RGSAMNPNDHPHGGGEGRAPIGRKSPMTPWGKKARGVKTRDRKKASNALIIRRRTK). Positions 252–276 (KKARGVKTRDRKKASNALIIRRRTK) are enriched in basic residues.

This sequence belongs to the universal ribosomal protein uL2 family. Part of the 50S ribosomal subunit. Forms a bridge to the 30S subunit in the 70S ribosome.

In terms of biological role, one of the primary rRNA binding proteins. Required for association of the 30S and 50S subunits to form the 70S ribosome, for tRNA binding and peptide bond formation. It has been suggested to have peptidyltransferase activity; this is somewhat controversial. Makes several contacts with the 16S rRNA in the 70S ribosome. The chain is Large ribosomal subunit protein uL2 from Aster yellows phytoplasma.